Here is a 130-residue protein sequence, read N- to C-terminus: Small ribosomal subunit protein uS9 (130 aa).

The interval 108–130 (SREKERKKYGQRGARARFQYSKR) is disordered.

It belongs to the universal ribosomal protein uS9 family.

This chain is Small ribosomal subunit protein uS9, found in Solidesulfovibrio magneticus (strain ATCC 700980 / DSM 13731 / RS-1) (Desulfovibrio magneticus).